The primary structure comprises 142 residues: Large ribosomal subunit protein bL17 (142 aa).

It belongs to the bacterial ribosomal protein bL17 family. In terms of assembly, part of the 50S ribosomal subunit. Contacts protein L32.

This Chlamydia pneumoniae (Chlamydophila pneumoniae) protein is Large ribosomal subunit protein bL17.